Reading from the N-terminus, the 591-residue chain is Probable LRR receptor-like serine/threonine-protein kinase At1g69990 (591 aa).

An N-terminal signal peptide occupies residues 1–18 (MKTISIFFVIILMSSSHA). Residues 19-218 (EDDVLCLKGF…GKNLTIIVTA (200 aa)) are Extracellular-facing. N46 carries N-linked (GlcNAc...) asparagine glycosylation. LRR repeat units lie at residues 66–88 (RILS…LKLC), 90–111 (SLQS…QICS), 115–137 (YLVT…IVDC), 139–162 (FLNS…TRLN), and 163–185 (RLQR…LSHY). N211 carries an N-linked (GlcNAc...) asparagine glycan. Residues 219–239 (GVIGAVGSLCVGFGMFWWFFI) form a helical membrane-spanning segment. Topologically, residues 240 to 591 (RDRRKMNNYG…LIFNKQEHLK (352 aa)) are cytoplasmic. T292 is modified (phosphothreonine). The Protein kinase domain occupies 295–573 (FDSGNIVVSS…KNLGDQHGFF (279 aa)). ATP-binding positions include 301–309 (VVSSRSGVS) and K323. The residue at position 378 (S378) is a Phosphoserine. T389 carries the post-translational modification Phosphothreonine. Phosphotyrosine is present on Y463. Phosphoserine is present on S465. The residue at position 466 (T466) is a Phosphothreonine. At S470 the chain carries Phosphoserine.

This sequence belongs to the protein kinase superfamily. Ser/Thr protein kinase family.

It localises to the membrane. The enzyme catalyses L-seryl-[protein] + ATP = O-phospho-L-seryl-[protein] + ADP + H(+). It carries out the reaction L-threonyl-[protein] + ATP = O-phospho-L-threonyl-[protein] + ADP + H(+). The sequence is that of Probable LRR receptor-like serine/threonine-protein kinase At1g69990 from Arabidopsis thaliana (Mouse-ear cress).